Consider the following 171-residue polypeptide: MTKWFNVGKIVNTHGVKGEIRVVSRTDFPEERYKVGNTLYISNEKGGEPFPVKITSHRQHKTFDLLTFEGYGNVNEVEQFKGSLLKVPEDQLGELAEGEYYYHEIIGCNVVTEEGEALGTIKEVLSPGANDVWVIKRPKGQDLLIPYIDDVVLQVNIENKLVTIHVMEGLL.

The PRC barrel domain maps to 97-170 (EGEYYYHEII…LVTIHVMEGL (74 aa)).

This sequence belongs to the RimM family. As to quaternary structure, binds ribosomal protein uS19.

Its subcellular location is the cytoplasm. In terms of biological role, an accessory protein needed during the final step in the assembly of 30S ribosomal subunit, possibly for assembly of the head region. Essential for efficient processing of 16S rRNA. May be needed both before and after RbfA during the maturation of 16S rRNA. It has affinity for free ribosomal 30S subunits but not for 70S ribosomes. The sequence is that of Ribosome maturation factor RimM from Bacillus thuringiensis (strain Al Hakam).